We begin with the raw amino-acid sequence, 132 residues long: Ribosome-binding factor A (132 aa).

The protein belongs to the RbfA family. As to quaternary structure, monomer. Binds 30S ribosomal subunits, but not 50S ribosomal subunits or 70S ribosomes.

The protein localises to the cytoplasm. One of several proteins that assist in the late maturation steps of the functional core of the 30S ribosomal subunit. Associates with free 30S ribosomal subunits (but not with 30S subunits that are part of 70S ribosomes or polysomes). Required for efficient processing of 16S rRNA. May interact with the 5'-terminal helix region of 16S rRNA. The sequence is that of Ribosome-binding factor A from Treponema denticola (strain ATCC 35405 / DSM 14222 / CIP 103919 / JCM 8153 / KCTC 15104).